Consider the following 433-residue polypeptide: uncharacterized protein (433 aa).

Residues 1-126 (MAAHIALIAH…VIKLLGKTKT (126 aa)) form a methylglyoxal synthase region. In terms of domain architecture, MGS-like spans 1 to 145 (MAAHIALIAH…GQGNVERELD (145 aa)). D62 is a catalytic residue. Residues 127–262 (GHLIFNPVAG…VDTALCNDIP (136 aa)) form the DAGKc domain.

In the N-terminal section; belongs to the methylglyoxal synthase family.

This is an uncharacterized protein from Synechocystis sp. (strain ATCC 27184 / PCC 6803 / Kazusa).